Reading from the N-terminus, the 1322-residue chain is MVSARYPIEKWSRPQLEDHFHNVVEELNKAQKKVKEQEKQITTFNSRFRRSMLERKSQNEKVVERSKYDDVVKENQILDMKLKAAKQQLLIYTAPSARATTASMMTGRSTFRQPPSTFRQRPPLTAGTTGSIDRPGSAPVARKKSDGGEKLQLATDEKLAIVRLNRTLKNKNDEITELKYTIEKLRQLKSSVNQSSPPTRLSTSSSSKSSSSNNNNDGEGKDSELEEMSEMSDDESGRSTPVIEEKKKPRRKSRKSSHQEPSKNPIPPPRIPDQTEKVLLDKLKVAENDLAMLQEECDLVKKANERLVHQSLSKSTEYGARESIEEKKKIVELEELLKETEKRIKESEHRRREDQKKFEAMRLHYKNKYDAAKKTEKKLSVVAKNSKVEEERIEEEKISHSPPPMTFEPIRKRHSQSEISRMRRADDDLLQKLYKEVADILHSHDVGIAEINTLGASENSLARWQKLYSELYEELEKVRNMLLIQYDINQKQMKEIKLLKDELDRLKTVSAEILSKSREEVEERQKKIFMLEEQIRTIAYSGQQPVKLLANQINIPTPRVNTDLSVKLINVKPSPSLTSKFFFSLEFFDFQLETTPIMDAKQHNMDFTTVYDVLVSNLLIHYLQTNGIVIEMYRPASDCYKLLAAATISLIPLFEDSVLRKFCSEIMLKSVDTGVEMCTLRYEIEVSQPISDSFKKFKKSEMARNMLPLQLENEDTEDTNFDPLTIMVNRVVGLDTFGKDPSTEFCIVDEFLSFSPYFTDFSTSSEIRSKRDCYIPKIDIARNLFATSSISFFLIENIPRQDGVIATLHLPLHPLCKLGGSIKGTFPMLDTDGRPSSVSLDLCLIWKHEIPSFFLKHEPKEPLKEVKDTPILPQPVRRTSKEFVVTPVKEAELHDAEPTSMPPKAPEPTTAPLRRLSTDSSDTSFSHSSKDLFSPPTNPQTYDYEIPAVTPALVDSDGEEEADRIVFDDDDDEIESVSAVSSQRDPEPLEVPERQVENLPSPEDTPRPSDPLKPNGTNESKESTPVTQRSVDKTDDVAPVDPELEPESGPEPEPVVESEPNEVAETEEDRKRELKTEELKSLLGALPPIAKPRNIPVGPIALTEQPEATRQQGSTGRILFTDPLHFSVPPSESSSTSSPRRAEKAPVPLPDYEGHSLIKVRKPLSPTDKDVLEPNMKVSIQLETFELVPGSSLTPLTREETTFFVDWVFLDFTNEQSKSTIFDFPRRPQEMVDIRYTKEYTLTRGQLSLLDQWIRASIKFELTIIKISPGDEEELGFGSLILVPNNTQNKSFVIDVYDRSGIVQAEMTLTLHFSRALIEQLT.

The first 22 residues, 1–22 (MVSARYPIEKWSRPQLEDHFHN), serve as a signal peptide directing secretion. A coiled-coil region spans residues 15–89 (QLEDHFHNVV…MKLKAAKQQL (75 aa)). Polar residues predominate over residues 108–119 (RSTFRQPPSTFR). Disordered stretches follow at residues 108-151 (RSTF…GEKL), 189-275 (KSSV…PDQT), and 392-418 (RIEE…SQSE). The segment covering 195–217 (SSPPTRLSTSSSSKSSSSNNNND) has biased composition (low complexity). Residues 224 to 234 (ELEEMSEMSDD) are compositionally biased toward acidic residues. A coiled-coil region spans residues 274–362 (QTEKVLLDKL…EDQKKFEAMR (89 aa)). Residues 456–538 (ASENSLARWQ…FMLEEQIRTI (83 aa)) adopt a coiled-coil conformation. Disordered regions lie at residues 891–1094 (AELH…KPRN) and 1121–1149 (TDPL…PVPL). Residues 918 to 927 (TDSSDTSFSH) are compositionally biased toward low complexity. The segment covering 956–975 (SDGEEEADRIVFDDDDDEIE) has biased composition (acidic residues). Over residues 984–996 (RDPEPLEVPERQV) the composition is skewed to basic and acidic residues. The segment covering 1015-1029 (NGTNESKESTPVTQR) has biased composition (polar residues). Residues 1042 to 1067 (PELEPESGPEPEPVVESEPNEVAETE) show a composition bias toward acidic residues. The span at 1068-1080 (EDRKRELKTEELK) shows a compositional bias: basic and acidic residues. Residues 1127-1139 (SVPPSESSSTSSP) are compositionally biased toward low complexity.

It belongs to the RPGRIP1 family. As to expression, expressed at the transition zone at the base of cilia. Expressed in ciliated sensory neurons, including the amphid neurons in the head.

The protein resides in the cell projection. The protein localises to the cilium. Thought to have an important role in cilia formation and cilia-mediated chemosensation. Involved in the docking of other MKS/MKSR proteins localized to the transition zone of the cilia. This Caenorhabditis elegans protein is Protein fantom (mks-5).